The following is a 362-amino-acid chain: Aminomethyltransferase (362 aa).

This sequence belongs to the GcvT family. In terms of assembly, the glycine cleavage system is composed of four proteins: P, T, L and H.

The enzyme catalyses N(6)-[(R)-S(8)-aminomethyldihydrolipoyl]-L-lysyl-[protein] + (6S)-5,6,7,8-tetrahydrofolate = N(6)-[(R)-dihydrolipoyl]-L-lysyl-[protein] + (6R)-5,10-methylene-5,6,7,8-tetrahydrofolate + NH4(+). In terms of biological role, the glycine cleavage system catalyzes the degradation of glycine. The polypeptide is Aminomethyltransferase (Listeria monocytogenes serotype 4b (strain F2365)).